The following is a 144-amino-acid chain: MPPKKKKVTGLIKLQIKAGAANPAPPVGPALGQHGVNIMEFCKAYNAATESQRGMVVPVEITVYEDRSFTFVTKTPPAARLILKHAGIEKGSGEPHKTKVANVTRDQVREIATIKMPDLNANDLDAAEKIIAGTARSMGVTVEG.

The protein belongs to the universal ribosomal protein uL11 family. In terms of assembly, part of the ribosomal stalk of the 50S ribosomal subunit. Interacts with L10 and the large rRNA to form the base of the stalk. L10 forms an elongated spine to which L12 dimers bind in a sequential fashion forming a multimeric L10(L12)X complex. One or more lysine residues are methylated.

Forms part of the ribosomal stalk which helps the ribosome interact with GTP-bound translation factors. The sequence is that of Large ribosomal subunit protein uL11 from Streptomyces sp. (strain FRI-5).